A 169-amino-acid polypeptide reads, in one-letter code: Orotate phosphoribosyltransferase (169 aa).

5-phospho-alpha-D-ribose 1-diphosphate is bound by residues arginine 86, lysine 90, histidine 92, and 111 to 119; that span reads EDVTTSGGS. Threonine 115 and arginine 143 together coordinate orotate.

The protein belongs to the purine/pyrimidine phosphoribosyltransferase family. PyrE subfamily. Homodimer. Mg(2+) is required as a cofactor.

The enzyme catalyses orotidine 5'-phosphate + diphosphate = orotate + 5-phospho-alpha-D-ribose 1-diphosphate. It functions in the pathway pyrimidine metabolism; UMP biosynthesis via de novo pathway; UMP from orotate: step 1/2. Catalyzes the transfer of a ribosyl phosphate group from 5-phosphoribose 1-diphosphate to orotate, leading to the formation of orotidine monophosphate (OMP). This Methanocorpusculum labreanum (strain ATCC 43576 / DSM 4855 / Z) protein is Orotate phosphoribosyltransferase.